Consider the following 430-residue polypeptide: Glutamate-1-semialdehyde 2,1-aminomutase (430 aa).

Position 267 is an N6-(pyridoxal phosphate)lysine (Lys267).

Belongs to the class-III pyridoxal-phosphate-dependent aminotransferase family. HemL subfamily. Homodimer. It depends on pyridoxal 5'-phosphate as a cofactor.

The protein localises to the cytoplasm. It catalyses the reaction (S)-4-amino-5-oxopentanoate = 5-aminolevulinate. Its pathway is porphyrin-containing compound metabolism; protoporphyrin-IX biosynthesis; 5-aminolevulinate from L-glutamyl-tRNA(Glu): step 2/2. The polypeptide is Glutamate-1-semialdehyde 2,1-aminomutase (Desulfotalea psychrophila (strain LSv54 / DSM 12343)).